The following is a 199-amino-acid chain: Nucleoid occlusion factor SlmA (199 aa).

An HTH tetR-type domain is found at 10-71 (RNRREEILQA…SLIEFIEDSL (62 aa)). Residues 34 to 53 (TTAKLAANVGVSEAALYRHF) constitute a DNA-binding region (H-T-H motif). Residues 120–140 (NRLQGRINQLFERIEVQIRQV) are a coiled coil.

It belongs to the nucleoid occlusion factor SlmA family. As to quaternary structure, homodimer. Interacts with FtsZ.

Its subcellular location is the cytoplasm. It localises to the nucleoid. Required for nucleoid occlusion (NO) phenomenon, which prevents Z-ring formation and cell division over the nucleoid. Acts as a DNA-associated cell division inhibitor that binds simultaneously chromosomal DNA and FtsZ, and disrupts the assembly of FtsZ polymers. SlmA-DNA-binding sequences (SBS) are dispersed on non-Ter regions of the chromosome, preventing FtsZ polymerization at these regions. This Photorhabdus laumondii subsp. laumondii (strain DSM 15139 / CIP 105565 / TT01) (Photorhabdus luminescens subsp. laumondii) protein is Nucleoid occlusion factor SlmA.